The following is a 402-amino-acid chain: Nodulation protein E (402 aa).

The 400-residue stretch at 2-401 (DRRVVITGMG…GTNAVLAFKQ (400 aa)) folds into the Ketosynthase family 3 (KS3) domain. Residues Cys162, His294, and His331 each act as for beta-ketoacyl synthase activity in the active site. Residues 329 to 348 (HAHCIGAASALEMIACVMAI) traverse the membrane as a helical segment.

This sequence belongs to the thiolase-like superfamily. Beta-ketoacyl-ACP synthases family.

Its subcellular location is the cell inner membrane. Proposed to synthesize NOD factor fatty acyl chain. Involved in the synthesis of a highly unsaturated fatty acid moiety, which forms part of a lipo-oligosaccharide that is responsible for host specificity. The polypeptide is Nodulation protein E (nodE) (Rhizobium meliloti (strain 1021) (Ensifer meliloti)).